Consider the following 348-residue polypeptide: RNA 3'-terminal phosphate cyclase (348 aa).

ATP is bound by residues Q102 and 285 to 288 (HMGD). H311 (tele-AMP-histidine intermediate) is an active-site residue.

Belongs to the RNA 3'-terminal cyclase family. Type 1 subfamily.

It localises to the cytoplasm. It catalyses the reaction a 3'-end 3'-phospho-ribonucleotide-RNA + ATP = a 3'-end 2',3'-cyclophospho-ribonucleotide-RNA + AMP + diphosphate. Its function is as follows. Catalyzes the conversion of 3'-phosphate to a 2',3'-cyclic phosphodiester at the end of RNA. The mechanism of action of the enzyme occurs in 3 steps: (A) adenylation of the enzyme by ATP; (B) transfer of adenylate to an RNA-N3'P to produce RNA-N3'PP5'A; (C) and attack of the adjacent 2'-hydroxyl on the 3'-phosphorus in the diester linkage to produce the cyclic end product. The biological role of this enzyme is unknown but it is likely to function in some aspects of cellular RNA processing. This chain is RNA 3'-terminal phosphate cyclase, found in Korarchaeum cryptofilum (strain OPF8).